Here is a 205-residue protein sequence, read N- to C-terminus: Small ribosomal subunit protein uS4 (205 aa).

Residues 103–173 (RRLQTIVMKK…LEKSKRAEAA (71 aa)) enclose the S4 RNA-binding domain. Residues 174-205 (AREAAAEAAEAEQAAAQAAAPTPAPAAAAPKQ) form a disordered region. A compositionally biased stretch (low complexity) spans 179 to 205 (AEAAEAEQAAAQAAAPTPAPAAAAPKQ).

Belongs to the universal ribosomal protein uS4 family. As to quaternary structure, part of the 30S ribosomal subunit. Contacts protein S5. The interaction surface between S4 and S5 is involved in control of translational fidelity.

One of the primary rRNA binding proteins, it binds directly to 16S rRNA where it nucleates assembly of the body of the 30S subunit. Functionally, with S5 and S12 plays an important role in translational accuracy. This chain is Small ribosomal subunit protein uS4, found in Cenarchaeum symbiosum (strain A).